Here is a 373-residue protein sequence, read N- to C-terminus: Erythronate-4-phosphate dehydrogenase (373 aa).

The substrate site is built by Ser45 and Thr67. NAD(+)-binding positions include Asp147, 206 to 208 (ASR), and Asp232. Arg208 is a catalytic residue. Residue Glu237 is part of the active site. Residue His254 is the Proton donor of the active site. Gly257 serves as a coordination point for NAD(+). Position 258 (Tyr258) interacts with substrate.

It belongs to the D-isomer specific 2-hydroxyacid dehydrogenase family. PdxB subfamily. Homodimer.

It localises to the cytoplasm. It catalyses the reaction 4-phospho-D-erythronate + NAD(+) = (R)-3-hydroxy-2-oxo-4-phosphooxybutanoate + NADH + H(+). Its pathway is cofactor biosynthesis; pyridoxine 5'-phosphate biosynthesis; pyridoxine 5'-phosphate from D-erythrose 4-phosphate: step 2/5. Catalyzes the oxidation of erythronate-4-phosphate to 3-hydroxy-2-oxo-4-phosphonooxybutanoate. This Tolumonas auensis (strain DSM 9187 / NBRC 110442 / TA 4) protein is Erythronate-4-phosphate dehydrogenase.